Reading from the N-terminus, the 81-residue chain is Acyl carrier protein (81 aa).

One can recognise a Carrier domain in the interval Gln-4–Val-79. O-(pantetheine 4'-phosphoryl)serine is present on Ser-39.

It belongs to the acyl carrier protein (ACP) family. In terms of processing, 4'-phosphopantetheine is transferred from CoA to a specific serine of apo-ACP by AcpS. This modification is essential for activity because fatty acids are bound in thioester linkage to the sulfhydryl of the prosthetic group.

The protein resides in the plastid. The protein localises to the chloroplast. Its pathway is lipid metabolism; fatty acid biosynthesis. In terms of biological role, carrier of the growing fatty acid chain in fatty acid biosynthesis. This Guillardia theta (Cryptophyte) protein is Acyl carrier protein.